The primary structure comprises 56 residues: Large ribosomal subunit protein bL33 (56 aa).

Belongs to the bacterial ribosomal protein bL33 family.

The chain is Large ribosomal subunit protein bL33 from Vibrio vulnificus (strain YJ016).